Here is a 260-residue protein sequence, read N- to C-terminus: Hydroxyethylthiazole kinase (260 aa).

Residue M38 coordinates substrate. Positions 114 and 159 each coordinate ATP. Residue G186 participates in substrate binding.

It belongs to the Thz kinase family. The cofactor is Mg(2+).

The catalysed reaction is 5-(2-hydroxyethyl)-4-methylthiazole + ATP = 4-methyl-5-(2-phosphooxyethyl)-thiazole + ADP + H(+). It participates in cofactor biosynthesis; thiamine diphosphate biosynthesis; 4-methyl-5-(2-phosphoethyl)-thiazole from 5-(2-hydroxyethyl)-4-methylthiazole: step 1/1. Its function is as follows. Catalyzes the phosphorylation of the hydroxyl group of 4-methyl-5-beta-hydroxyethylthiazole (THZ). The sequence is that of Hydroxyethylthiazole kinase from Helicobacter pylori (strain HPAG1).